The following is a 292-amino-acid chain: UTP--glucose-1-phosphate uridylyltransferase (292 aa).

This sequence belongs to the UDPGP type 2 family. As to quaternary structure, interacts with FloT.

The protein resides in the cell membrane. The protein localises to the membrane raft. It catalyses the reaction alpha-D-glucose 1-phosphate + UTP + H(+) = UDP-alpha-D-glucose + diphosphate. It participates in glycolipid metabolism; diglucosyl-diacylglycerol biosynthesis. Catalyzes the formation of UDP-glucose from glucose-1-phosphate and UTP. This is an intermediate step in the biosynthesis of diglucosyl-diacylglycerol (Glc2-DAG), i.e. the predominant glycolipid found in B.subtilis membrane, which is also used as a membrane anchor for lipoteichoic acid (LTA). Has a role in the biosynthesis of all phosphate-containing envelope polymers, since UDP-glucose serves as a glucosyl donor not only for the biosynthesis of LTA but also for wall teichoic acids (WTAs). Is required for biofilm formation. This is likely due to another role of UDP-glucose, which might also act as a metabolic signal regulating biofilm formation or may be involved in some unknown biosynthetic pathway essential for biofilm formation, e.g. the synthesis of an exopolysaccharide. This Bacillus subtilis (strain 168) protein is UTP--glucose-1-phosphate uridylyltransferase (gtaB).